The following is a 151-amino-acid chain: MARLHSGKRGSSGSTRPLRTEVPAWANITAEETEEVIVKMAKEGKQSAMIGLILRDSYGIPDVKLVTGKSVAQIMKDNNVYPEIPEDLFNLMKKAINLRNHLEENTKDIHSKRGLQLTESKIRRLVKYYRNTKVLPAKWRYSPETARLLVE.

The segment at 1 to 20 (MARLHSGKRGSSGSTRPLRT) is disordered.

It belongs to the universal ribosomal protein uS15 family. As to quaternary structure, part of the 30S ribosomal subunit.

The chain is Small ribosomal subunit protein uS15 from Methanococcus aeolicus (strain ATCC BAA-1280 / DSM 17508 / OCM 812 / Nankai-3).